The primary structure comprises 193 residues: Adenylate kinase (193 aa).

Residue 10–15 (GAGKGT) coordinates ATP. The segment at 30 to 59 (STGDMLRAAVKAGTPIGLKAKAVMDAGGLV) is NMP. AMP contacts are provided by residues threonine 31, arginine 36, 57 to 59 (GLV), 85 to 88 (GFPR), and glutamine 92. The LID stretch occupies residues 126–142 (KRAKETLAAGGTVRADD). Arginine 127 is an ATP binding site. Residues arginine 139 and arginine 150 each coordinate AMP. Alanine 178 is a binding site for ATP.

It belongs to the adenylate kinase family. In terms of assembly, monomer.

The protein resides in the cytoplasm. The catalysed reaction is AMP + ATP = 2 ADP. Its pathway is purine metabolism; AMP biosynthesis via salvage pathway; AMP from ADP: step 1/1. Catalyzes the reversible transfer of the terminal phosphate group between ATP and AMP. Plays an important role in cellular energy homeostasis and in adenine nucleotide metabolism. This is Adenylate kinase from Beijerinckia indica subsp. indica (strain ATCC 9039 / DSM 1715 / NCIMB 8712).